The following is a 193-amino-acid chain: dITP/XTP pyrophosphatase (193 aa).

Residue 7-12 coordinates substrate; sequence SENENK. Catalysis depends on Asp65, which acts as the Proton acceptor. Asp65 provides a ligand contact to Mg(2+). Substrate-binding positions include Ser66, 144 to 147, Lys167, and 172 to 173; these read FGYD and HR.

The protein belongs to the HAM1 NTPase family. As to quaternary structure, homodimer. Requires Mg(2+) as cofactor.

It catalyses the reaction XTP + H2O = XMP + diphosphate + H(+). It carries out the reaction dITP + H2O = dIMP + diphosphate + H(+). The catalysed reaction is ITP + H2O = IMP + diphosphate + H(+). Its function is as follows. Pyrophosphatase that catalyzes the hydrolysis of nucleoside triphosphates to their monophosphate derivatives, with a high preference for the non-canonical purine nucleotides XTP (xanthosine triphosphate), dITP (deoxyinosine triphosphate) and ITP. Seems to function as a house-cleaning enzyme that removes non-canonical purine nucleotides from the nucleotide pool, thus preventing their incorporation into DNA/RNA and avoiding chromosomal lesions. In Tropheryma whipplei (strain Twist) (Whipple's bacillus), this protein is dITP/XTP pyrophosphatase.